Here is a 200-residue protein sequence, read N- to C-terminus: UPF0316 protein SAUSA300_1892 (200 aa).

Transmembrane regions (helical) follow at residues 8–28 (PWLMVLTIFIINICYVTFLTM), 40–60 (IAASVSFLEVLVYIVGLGLVM), and 66–86 (IQNIIAYAFGFSIGIIVGMKI).

The protein belongs to the UPF0316 family.

The protein localises to the cell membrane. The protein is UPF0316 protein SAUSA300_1892 of Staphylococcus aureus (strain USA300).